Consider the following 94-residue polypeptide: MFTINAEVRNEQGKGASRRLRTAGKFPAIVYGGSEAALSVTLDHDSTMNLSEKDGFYTDVLTLSVDGKEIKVKIQAVQRHPYKPKITHIDFVRA.

Belongs to the bacterial ribosomal protein bL25 family. In terms of assembly, part of the 50S ribosomal subunit; part of the 5S rRNA/L5/L18/L25 subcomplex. Contacts the 5S rRNA. Binds to the 5S rRNA independently of L5 and L18.

This is one of the proteins that binds to the 5S RNA in the ribosome where it forms part of the central protuberance. This Edwardsiella ictaluri (strain 93-146) protein is Large ribosomal subunit protein bL25.